The chain runs to 824 residues: Ent-copalyl diphosphate synthase AN1, chloroplastic (824 aa).

The N-terminal 63 residues, M1 to R63, are a transit peptide targeting the chloroplast. The segment at M1–E87 is disordered. Residues A44–R63 show a composition bias toward polar residues. K247 is a binding site for substrate. 2 residues coordinate Mg(2+): D379 and D381. The DXDD motif signature appears at D379–D382. Substrate is bound at residue K465.

Belongs to the terpene synthase family. Tpsc subfamily. It depends on Mg(2+) as a cofactor.

It localises to the plastid. The protein localises to the chloroplast. It carries out the reaction (2E,6E,10E)-geranylgeranyl diphosphate = ent-copalyl diphosphate. Its pathway is plant hormone biosynthesis; gibberellin biosynthesis. Involved in giberellin biosynthesis. Catalyzes the conversion of geranylgeranyl diphosphate to the gibberellin precursor ent-copalyl diphosphate. This Zea mays (Maize) protein is Ent-copalyl diphosphate synthase AN1, chloroplastic.